A 300-amino-acid chain; its full sequence is Protoheme IX farnesyltransferase (300 aa).

Helical transmembrane passes span 24–44 (VTQL…PGMV), 46–66 (WHVL…AFAI), 94–114 (PQIL…LYTF), 118–138 (LTMW…TLLL), 146–166 (IVIG…AVTG), 172–192 (AWIL…VLAL), 217–237 (LHIL…FISG), 239–259 (SGAV…AYAW), and 278–298 (IVYL…RPLL).

This sequence belongs to the UbiA prenyltransferase family. Protoheme IX farnesyltransferase subfamily.

It localises to the cell inner membrane. The enzyme catalyses heme b + (2E,6E)-farnesyl diphosphate + H2O = Fe(II)-heme o + diphosphate. It participates in porphyrin-containing compound metabolism; heme O biosynthesis; heme O from protoheme: step 1/1. Functionally, converts heme B (protoheme IX) to heme O by substitution of the vinyl group on carbon 2 of heme B porphyrin ring with a hydroxyethyl farnesyl side group. The polypeptide is Protoheme IX farnesyltransferase (Burkholderia cenocepacia (strain HI2424)).